Consider the following 452-residue polypeptide: Coproporphyrinogen III oxidase (452 aa).

FAD contacts are provided by residues 10 to 15 (GGGISG), 36 to 37 (EP), 58 to 61 (GAEA), V242, W390, and 426 to 428 (IGV).

Belongs to the protoporphyrinogen/coproporphyrinogen oxidase family. Coproporphyrinogen III oxidase subfamily. The cofactor is FAD.

The protein localises to the cytoplasm. The enzyme catalyses coproporphyrinogen III + 3 O2 = coproporphyrin III + 3 H2O2. It participates in porphyrin-containing compound metabolism; protoheme biosynthesis. In terms of biological role, involved in coproporphyrin-dependent heme b biosynthesis. Catalyzes the oxidation of coproporphyrinogen III to coproporphyrin III. This Mycobacterium bovis (strain ATCC BAA-935 / AF2122/97) protein is Coproporphyrinogen III oxidase.